The sequence spans 682 residues: Potassium-transporting ATPase ATP-binding subunit (682 aa).

4 helical membrane-spanning segments follow: residues 34 to 54 (PVMFIVWIGSLLTTCISIAMA), 62 to 82 (ALFSAAISGWLWVTVLFANFA), 219 to 239 (IALTILLIALTIVFLLATATL), and 254 to 274 (VLVALLVCLIPTTIGGLLSAI). The active-site 4-aspartylphosphate intermediate is D307. ATP-binding positions include D344, E348, 377-384 (FTAQSRMS), and K395. Mg(2+) is bound by residues D518 and D522. 3 helical membrane passes run 588 to 608 (FAIIPAAFAATYPQLNALNIM), 616 to 636 (AILSAVIFNALIIVFLIPLAL), and 656 to 676 (IYGLGGLLVPFIGIKVIDLLL).

It belongs to the cation transport ATPase (P-type) (TC 3.A.3) family. Type IA subfamily. In terms of assembly, the system is composed of three essential subunits: KdpA, KdpB and KdpC.

It is found in the cell inner membrane. The catalysed reaction is K(+)(out) + ATP + H2O = K(+)(in) + ADP + phosphate + H(+). Its function is as follows. Part of the high-affinity ATP-driven potassium transport (or Kdp) system, which catalyzes the hydrolysis of ATP coupled with the electrogenic transport of potassium into the cytoplasm. This subunit is responsible for energy coupling to the transport system and for the release of the potassium ions to the cytoplasm. This is Potassium-transporting ATPase ATP-binding subunit from Escherichia coli (strain UTI89 / UPEC).